The chain runs to 398 residues: Succinyl-diaminopimelate desuccinylase (398 aa).

His73 is a binding site for Zn(2+). Asp75 is an active-site residue. Asp106 is a binding site for Zn(2+). Glu140 (proton acceptor) is an active-site residue. Residues Glu141, Glu169, and His366 each contribute to the Zn(2+) site.

It belongs to the peptidase M20A family. DapE subfamily. In terms of assembly, homodimer. Zn(2+) serves as cofactor. Requires Co(2+) as cofactor.

It carries out the reaction N-succinyl-(2S,6S)-2,6-diaminopimelate + H2O = (2S,6S)-2,6-diaminopimelate + succinate. It functions in the pathway amino-acid biosynthesis; L-lysine biosynthesis via DAP pathway; LL-2,6-diaminopimelate from (S)-tetrahydrodipicolinate (succinylase route): step 3/3. Functionally, catalyzes the hydrolysis of N-succinyl-L,L-diaminopimelic acid (SDAP), forming succinate and LL-2,6-diaminopimelate (DAP), an intermediate involved in the bacterial biosynthesis of lysine and meso-diaminopimelic acid, an essential component of bacterial cell walls. This Agrobacterium fabrum (strain C58 / ATCC 33970) (Agrobacterium tumefaciens (strain C58)) protein is Succinyl-diaminopimelate desuccinylase.